Reading from the N-terminus, the 20-residue chain is Octopamine receptor (20 aa).

Belongs to the G-protein coupled receptor 1 family.

It localises to the cell membrane. Its function is as follows. Putative receptor for octopamine. Octopamine (OA) is a neurotransmitter, neurohormone, and neuromodulator in invertebrates. The activity of this receptor is mediated by G proteins which activate adenylyl cyclase. This Photinus pyralis (Common eastern firefly) protein is Octopamine receptor.